A 279-amino-acid chain; its full sequence is Small ribosomal subunit protein uS2 (279 aa).

Positions 232–279 (RRRGTDEKPEAGVASDEPLAEWERELLEEPKKSDEPKSDEQPAAAAAE) are disordered. Residues 252–271 (EWERELLEEPKKSDEPKSDE) are compositionally biased toward basic and acidic residues.

This sequence belongs to the universal ribosomal protein uS2 family.

The polypeptide is Small ribosomal subunit protein uS2 (Salinispora arenicola (strain CNS-205)).